We begin with the raw amino-acid sequence, 124 residues long: Small ribosomal subunit protein uS12 (124 aa).

Asp-89 carries the 3-methylthioaspartic acid modification.

Belongs to the universal ribosomal protein uS12 family. In terms of assembly, part of the 30S ribosomal subunit. Contacts proteins S8 and S17. May interact with IF1 in the 30S initiation complex.

In terms of biological role, with S4 and S5 plays an important role in translational accuracy. Its function is as follows. Interacts with and stabilizes bases of the 16S rRNA that are involved in tRNA selection in the A site and with the mRNA backbone. Located at the interface of the 30S and 50S subunits, it traverses the body of the 30S subunit contacting proteins on the other side and probably holding the rRNA structure together. The combined cluster of proteins S8, S12 and S17 appears to hold together the shoulder and platform of the 30S subunit. This chain is Small ribosomal subunit protein uS12, found in Vibrio campbellii (strain ATCC BAA-1116).